The primary structure comprises 572 residues: Proline--tRNA ligase (572 aa).

It belongs to the class-II aminoacyl-tRNA synthetase family. ProS type 1 subfamily. Homodimer.

Its subcellular location is the cytoplasm. The enzyme catalyses tRNA(Pro) + L-proline + ATP = L-prolyl-tRNA(Pro) + AMP + diphosphate. Functionally, catalyzes the attachment of proline to tRNA(Pro) in a two-step reaction: proline is first activated by ATP to form Pro-AMP and then transferred to the acceptor end of tRNA(Pro). As ProRS can inadvertently accommodate and process non-cognate amino acids such as alanine and cysteine, to avoid such errors it has two additional distinct editing activities against alanine. One activity is designated as 'pretransfer' editing and involves the tRNA(Pro)-independent hydrolysis of activated Ala-AMP. The other activity is designated 'posttransfer' editing and involves deacylation of mischarged Ala-tRNA(Pro). The misacylated Cys-tRNA(Pro) is not edited by ProRS. This Escherichia coli O157:H7 protein is Proline--tRNA ligase.